A 484-amino-acid chain; its full sequence is 1,3-beta-glucanosyltransferase GAS5 (484 aa).

Positions 1-19 are cleaved as a signal peptide; the sequence is MLLRSLTSAFVLSAGLAQA. N-linked (GlcNAc...) asparagine glycosylation is found at Asn24 and Asn60. Cys71 and Cys100 form a disulfide bridge. (1,3-beta-D-glucosyl)n-binding residues include Tyr89, Asn159, and Glu160. Glu160 serves as the catalytic Proton donor. Asn166 is a glycosylation site (N-linked (GlcNAc...) asparagine). 2 residues coordinate (1,3-beta-D-glucosyl)n: Asp201 and Arg206. 2 disulfide bridges follow: Cys215–Cys348 and Cys234–Cys265. Glu262 (nucleophile) is an active-site residue. Residue Tyr295 coordinates (1,3-beta-D-glucosyl)n. N-linked (GlcNAc...) asparagine glycans are attached at residues Asn299, Asn344, and Asn359. The interval 383–462 is disordered; that stretch reads TGIATQQSCD…SSQSSSKSKG (80 aa). Positions 394-404 are enriched in acidic residues; it reads KDDDDEEDDDT. Residues 405 to 462 show a composition bias toward low complexity; that stretch reads SSSSSSSSSSSSSASSSSESSSSTSKASSSSPSASETSLLKSAASATSSSQSSSKSKG. The GPI-anchor amidated glycine moiety is linked to residue Gly462. Residues 463 to 484 constitute a propeptide, removed in mature form; it reads AAGIIEIPLIFRALAELYNLVL.

Belongs to the glycosyl hydrolase 72 family. Post-translationally, the GPI-anchor is attached to the protein in the endoplasmic reticulum and serves to target the protein to the cell surface. There, the glucosamine-inositol phospholipid moiety is cleaved off and the GPI-modified mannoprotein is covalently attached via its lipidless GPI glycan remnant to the 1,6-beta-glucan of the outer cell wall layer.

Its subcellular location is the secreted. The protein localises to the cell wall. It localises to the membrane. Splits internally a 1,3-beta-glucan molecule and transfers the newly generated reducing end (the donor) to the non-reducing end of another 1,3-beta-glucan molecule (the acceptor) forming a 1,3-beta linkage, resulting in the elongation of 1,3-beta-glucan chains in the cell wall. Involved in cell wall biosynthesis and morphogenesis. The protein is 1,3-beta-glucanosyltransferase GAS5 (GAS5) of Saccharomyces cerevisiae (strain ATCC 204508 / S288c) (Baker's yeast).